The primary structure comprises 429 residues: Inositol-3-phosphate synthase 1 (429 aa).

The helical transmembrane segment at 12 to 32 (LGVLVVGVGGAVATTMIVGTL) threads the bilayer. The NAD(+) site is built by Ala22, Val23, Asp79, Ala116, Ala165, Thr167, Tyr201, Ser244, Arg276, Asp277, and Lys290.

Belongs to the myo-inositol 1-phosphate synthase family. As to quaternary structure, homotetramer. Requires NAD(+) as cofactor.

The protein localises to the membrane. It catalyses the reaction D-glucose 6-phosphate = 1D-myo-inositol 3-phosphate. The protein operates within polyol metabolism; myo-inositol biosynthesis; myo-inositol from D-glucose 6-phosphate: step 1/2. Key enzyme in myo-inositol biosynthesis pathway that catalyzes the conversion of glucose 6-phosphate to 1D-myo-inositol 3-phosphate in a NAD-dependent manner. This is Inositol-3-phosphate synthase 1 from Bacteroides thetaiotaomicron (strain ATCC 29148 / DSM 2079 / JCM 5827 / CCUG 10774 / NCTC 10582 / VPI-5482 / E50).